An 88-amino-acid polypeptide reads, in one-letter code: Small ribosomal subunit protein bS20 (88 aa).

Belongs to the bacterial ribosomal protein bS20 family.

Binds directly to 16S ribosomal RNA. The sequence is that of Small ribosomal subunit protein bS20 from Oenococcus oeni (strain ATCC BAA-331 / PSU-1).